Here is a 282-residue protein sequence, read N- to C-terminus: Release factor glutamine methyltransferase (282 aa).

S-adenosyl-L-methionine contacts are provided by residues 120–124 (GVGSG), aspartate 143, and asparagine 189. 189 to 192 (NPPY) contributes to the substrate binding site.

Belongs to the protein N5-glutamine methyltransferase family. PrmC subfamily.

It carries out the reaction L-glutaminyl-[peptide chain release factor] + S-adenosyl-L-methionine = N(5)-methyl-L-glutaminyl-[peptide chain release factor] + S-adenosyl-L-homocysteine + H(+). Functionally, methylates the class 1 translation termination release factors RF1/PrfA and RF2/PrfB on the glutamine residue of the universally conserved GGQ motif. This is Release factor glutamine methyltransferase from Dictyoglomus turgidum (strain DSM 6724 / Z-1310).